Here is a 233-residue protein sequence, read N- to C-terminus: Gamma-glutamyl-hercynylcysteine sulfoxide hydrolase (233 aa).

The Nucleophile role is filled by C2. The Glutamine amidotransferase type-2 domain occupies 2 to 233 (CRHLGWLGAQ…TALDRAKGPR (232 aa)).

It catalyses the reaction gamma-L-glutamyl-hercynylcysteine S-oxide + H2O = S-(hercyn-2-yl)-L-cysteine S-oxide + L-glutamate. Its pathway is amino-acid biosynthesis; ergothioneine biosynthesis. Functionally, catalyzes the hydrolysis of the gamma-glutamyl amide bond of hercynyl-gamma-L-glutamyl-L-cysteine sulfoxide to produce hercynylcysteine sulfoxide, a step in the biosynthesis pathway of ergothioneine. ERG is one of the major redox buffers which protects bacteria against redox stressors and antibiotics; loss of ERG or mycothiol (MSH, the other major redox buffer in this bacteria) leads to respiratory alterations and bioenergetic deficiencies that negatively impact virulence. This chain is Gamma-glutamyl-hercynylcysteine sulfoxide hydrolase, found in Mycobacterium tuberculosis (strain CDC 1551 / Oshkosh).